Here is an 88-residue protein sequence, read N- to C-terminus: Thioredoxin-2 (88 aa).

A Thioredoxin domain is found at 2–88; the sequence is SRVIHISSNE…YRNGAKVSEF (87 aa). Catalysis depends on nucleophile residues cysteine 31 and cysteine 34. A disulfide bridge links cysteine 31 with cysteine 34.

It belongs to the thioredoxin family.

In terms of biological role, participates in various redox reactions through the reversible oxidation of its active center dithiol to a disulfide and catalyzes dithiol-disulfide exchange reactions. This is Thioredoxin-2 (trxB) from Dictyostelium discoideum (Social amoeba).